The chain runs to 518 residues: MFS-type transporter cnsO (518 aa).

Positions 1-13 (MESTDSSPPLSMT) are enriched in polar residues. Residues 1 to 24 (MESTDSSPPLSMTDTEKKGDAVTT) are disordered. The next 9 membrane-spanning stretches (helical) occupy residues 99–119 (LALM…NIML), 122–142 (VGPK…TTLT), 156–176 (LMLG…LSMW), 187–207 (AIFY…AYGV), 221–241 (WLFL…LFCL), 298–318 (FMMM…SYTL), 334–354 (VMTT…GYIS), 362–382 (LCIM…WITV), and 392–412 (YFAI…VGAW). An N-linked (GlcNAc...) asparagine glycan is attached at Asn416. Helical transmembrane passes span 427 to 447 (IGLL…NIYI) and 455 to 475 (PLGF…PATI).

It belongs to the major facilitator superfamily.

The protein resides in the cell membrane. Functionally, MFS-type transporter; part of the gene cluster that mediates the biosynthesis of communesins, a prominent class of indole alkaloids with great potential as pharmaceuticals. With the MFS transporter cnsL, is most likely responsible for cummunesins secretion and thereby may contribute to intrinsic resistance. In Penicillium expansum (Blue mold rot fungus), this protein is MFS-type transporter cnsO.